Here is a 120-residue protein sequence, read N- to C-terminus: NAD(P)H-quinone oxidoreductase subunit 3 (120 aa).

Transmembrane regions (helical) follow at residues 11–31, 64–84, and 89–109; these read LIFL…SYLI, MFAL…PWAV, and LGLL…VALV.

The protein belongs to the complex I subunit 3 family. In terms of assembly, NDH-1 can be composed of about 15 different subunits; different subcomplexes with different compositions have been identified which probably have different functions.

Its subcellular location is the cell inner membrane. It catalyses the reaction a plastoquinone + NADH + (n+1) H(+)(in) = a plastoquinol + NAD(+) + n H(+)(out). The enzyme catalyses a plastoquinone + NADPH + (n+1) H(+)(in) = a plastoquinol + NADP(+) + n H(+)(out). Functionally, NDH-1 shuttles electrons from an unknown electron donor, via FMN and iron-sulfur (Fe-S) centers, to quinones in the respiratory and/or the photosynthetic chain. The immediate electron acceptor for the enzyme in this species is believed to be plastoquinone. Couples the redox reaction to proton translocation, and thus conserves the redox energy in a proton gradient. Cyanobacterial NDH-1 also plays a role in inorganic carbon-concentration. This is NAD(P)H-quinone oxidoreductase subunit 3 from Gloeobacter violaceus (strain ATCC 29082 / PCC 7421).